Here is a 304-residue protein sequence, read N- to C-terminus: D-alanine--D-alanine ligase (304 aa).

Residues 103 to 301 (KQVWLALGLP…FDDLVWRILE (199 aa)) enclose the ATP-grasp domain. 132-187 (VEMLGFPVIIKPAKEGSSVGVSRVFALEHLEEAVALAARYEGELLMEQLIEGDELT) serves as a coordination point for ATP. Mg(2+) contacts are provided by aspartate 254, glutamate 268, and asparagine 270.

The protein belongs to the D-alanine--D-alanine ligase family. Requires Mg(2+) as cofactor. It depends on Mn(2+) as a cofactor.

The protein resides in the cytoplasm. The enzyme catalyses 2 D-alanine + ATP = D-alanyl-D-alanine + ADP + phosphate + H(+). It functions in the pathway cell wall biogenesis; peptidoglycan biosynthesis. Functionally, cell wall formation. This chain is D-alanine--D-alanine ligase, found in Xylella fastidiosa (strain Temecula1 / ATCC 700964).